We begin with the raw amino-acid sequence, 420 residues long: Glutamyl-tRNA reductase (420 aa).

Substrate-binding positions include 49-52 (TCNR), Ser107, 112-114 (EPQ), and Gln118. Cys50 acts as the Nucleophile in catalysis. 187-192 (GAGETI) contributes to the NADP(+) binding site.

This sequence belongs to the glutamyl-tRNA reductase family. In terms of assembly, homodimer.

The catalysed reaction is (S)-4-amino-5-oxopentanoate + tRNA(Glu) + NADP(+) = L-glutamyl-tRNA(Glu) + NADPH + H(+). Its pathway is porphyrin-containing compound metabolism; protoporphyrin-IX biosynthesis; 5-aminolevulinate from L-glutamyl-tRNA(Glu): step 1/2. Functionally, catalyzes the NADPH-dependent reduction of glutamyl-tRNA(Glu) to glutamate 1-semialdehyde (GSA). The sequence is that of Glutamyl-tRNA reductase from Photobacterium profundum (strain SS9).